Here is a 228-residue protein sequence, read N- to C-terminus: Adenosylcobinamide-GDP ribazoletransferase (228 aa).

Helical transmembrane passes span 24 to 44 (VWML…ILYL), 50 to 70 (NVLS…DGLA), 96 to 116 (IAGT…LFSA), 117 to 137 (PFYS…LALA), 159 to 176 (VFLG…ILLY), and 181 to 198 (IFAL…KISL).

The protein belongs to the CobS family. Mg(2+) serves as cofactor.

The protein localises to the cell membrane. The enzyme catalyses alpha-ribazole + adenosylcob(III)inamide-GDP = adenosylcob(III)alamin + GMP + H(+). It catalyses the reaction alpha-ribazole 5'-phosphate + adenosylcob(III)inamide-GDP = adenosylcob(III)alamin 5'-phosphate + GMP + H(+). Its pathway is cofactor biosynthesis; adenosylcobalamin biosynthesis; adenosylcobalamin from cob(II)yrinate a,c-diamide: step 7/7. Joins adenosylcobinamide-GDP and alpha-ribazole to generate adenosylcobalamin (Ado-cobalamin). Also synthesizes adenosylcobalamin 5'-phosphate from adenosylcobinamide-GDP and alpha-ribazole 5'-phosphate. This chain is Adenosylcobinamide-GDP ribazoletransferase, found in Pyrococcus furiosus (strain ATCC 43587 / DSM 3638 / JCM 8422 / Vc1).